Reading from the N-terminus, the 156-residue chain is MALEKSLVLLPLLVLILLVLGWVQPSLGKESRAKKFQRQHMDSGSSPNSNSTYCNQMMRRRNMTQGRCKPVNTFVHEPLVDVQNVCFQEKVTCKNGQGNCYKSNSSMHITDCRLTHGSRYPNCAYRTSTKERHIIVACEGSPYVPVHFDASVEDST.

Positions 1–28 (MALEKSLVLLPLLVLILLVLGWVQPSLG) are cleaved as a signal peptide. Substrate is bound by residues Lys-35 and Arg-38. The active-site Proton acceptor is the His-40. N-linked (GlcNAc...) asparagine glycosylation is found at Asn-50 and Asn-62. 4 disulfide bridges follow: Cys-54–Cys-112, Cys-68–Cys-123, Cys-86–Cys-138, and Cys-93–Cys-100. Residues 69 to 73 (KPVNT) and Lys-94 contribute to the substrate site. The N-linked (GlcNAc...) asparagine glycan is linked to Asn-104. Arg-113 is a binding site for substrate. Residue His-147 is the Proton donor of the active site.

The protein belongs to the pancreatic ribonuclease family. Monomer. Interacts with and forms tight 1:1 complexes with RNH1. Dimerization of two such complexes may occur. Interaction with RNH1 inhibits this protein. Pancreas and other tissues and body fluids (indicating it may have other physiological functions besides its role in digestion).

It is found in the secreted. The enzyme catalyses an [RNA] containing cytidine + H2O = an [RNA]-3'-cytidine-3'-phosphate + a 5'-hydroxy-ribonucleotide-3'-[RNA].. It carries out the reaction an [RNA] containing uridine + H2O = an [RNA]-3'-uridine-3'-phosphate + a 5'-hydroxy-ribonucleotide-3'-[RNA].. Functionally, endonuclease that catalyzes the cleavage of RNA on the 3' side of pyrimidine nucleotides. Acts on single-stranded and double-stranded RNA. The sequence is that of Ribonuclease pancreatic (RNASE1) from Pongo pygmaeus (Bornean orangutan).